The following is a 517-amino-acid chain: Ribose import ATP-binding protein RbsA 1 (517 aa).

2 ABC transporter domains span residues 11-251 (LEMR…VGRD) and 263-507 (YDPG…ALAT). 43–50 (GENGAGKS) contributes to the ATP binding site.

This sequence belongs to the ABC transporter superfamily. Ribose importer (TC 3.A.1.2.1) family. The complex is composed of an ATP-binding protein (RbsA), two transmembrane proteins (RbsC) and a solute-binding protein (RbsB).

The protein resides in the cell inner membrane. The catalysed reaction is D-ribose(out) + ATP + H2O = D-ribose(in) + ADP + phosphate + H(+). In terms of biological role, part of the ABC transporter complex RbsABC involved in ribose import. Responsible for energy coupling to the transport system. The protein is Ribose import ATP-binding protein RbsA 1 of Burkholderia ambifaria (strain ATCC BAA-244 / DSM 16087 / CCUG 44356 / LMG 19182 / AMMD) (Burkholderia cepacia (strain AMMD)).